The primary structure comprises 266 residues: Undecaprenyl-diphosphatase (266 aa).

Transmembrane regions (helical) follow at residues 4–24 (LATI…PVSS), 41–61 (GSAA…LVAY), 79–99 (AVAF…VGAV), 108–128 (LESP…ILAI), 143–163 (MPLR…IPGV), 184–204 (AEFS…YSLW), 220–240 (IGLF…VAIV), and 243–263 (FGFA…LLWL).

Belongs to the UppP family.

Its subcellular location is the cell inner membrane. It carries out the reaction di-trans,octa-cis-undecaprenyl diphosphate + H2O = di-trans,octa-cis-undecaprenyl phosphate + phosphate + H(+). In terms of biological role, catalyzes the dephosphorylation of undecaprenyl diphosphate (UPP). Confers resistance to bacitracin. This Sphingopyxis alaskensis (strain DSM 13593 / LMG 18877 / RB2256) (Sphingomonas alaskensis) protein is Undecaprenyl-diphosphatase.